Reading from the N-terminus, the 321-residue chain is NADH-quinone oxidoreductase subunit H (321 aa).

8 helical membrane-spanning segments follow: residues 9–29 (LLAI…GAYM), 78–98 (IIFT…FAIM), 111–131 (IGIL…LLGG), 156–176 (FLGL…ISTI), 183–203 (IWNI…GLAI), 234–254 (FFIG…TLFF), 262–282 (LPPY…FILI), and 296–316 (ILGW…TAIV).

The protein belongs to the complex I subunit 1 family. As to quaternary structure, NDH-1 is composed of 14 different subunits. Subunits NuoA, H, J, K, L, M, N constitute the membrane sector of the complex.

Its subcellular location is the cell membrane. It catalyses the reaction a quinone + NADH + 5 H(+)(in) = a quinol + NAD(+) + 4 H(+)(out). NDH-1 shuttles electrons from NADH, via FMN and iron-sulfur (Fe-S) centers, to quinones in the respiratory chain. The immediate electron acceptor for the enzyme in this species is believed to be ubiquinone. Couples the redox reaction to proton translocation (for every two electrons transferred, four hydrogen ions are translocated across the cytoplasmic membrane), and thus conserves the redox energy in a proton gradient. This subunit may bind ubiquinone. The protein is NADH-quinone oxidoreductase subunit H of Baumannia cicadellinicola subsp. Homalodisca coagulata.